The sequence spans 398 residues: 1-deoxy-D-xylulose 5-phosphate reductoisomerase (398 aa).

Positions 10, 11, 12, 13, 36, 37, 38, and 124 each coordinate NADPH. A 1-deoxy-D-xylulose 5-phosphate-binding site is contributed by K125. E126 is a binding site for NADPH. Mn(2+) is bound at residue D150. 1-deoxy-D-xylulose 5-phosphate is bound by residues S151, E152, S186, and H209. E152 is a Mn(2+) binding site. Position 215 (G215) interacts with NADPH. 1-deoxy-D-xylulose 5-phosphate-binding residues include S222, N227, K228, and E231. Residue E231 coordinates Mn(2+).

It belongs to the DXR family. In terms of assembly, homodimer. Requires Mg(2+) as cofactor. Mn(2+) is required as a cofactor.

The catalysed reaction is 2-C-methyl-D-erythritol 4-phosphate + NADP(+) = 1-deoxy-D-xylulose 5-phosphate + NADPH + H(+). It participates in isoprenoid biosynthesis; isopentenyl diphosphate biosynthesis via DXP pathway; isopentenyl diphosphate from 1-deoxy-D-xylulose 5-phosphate: step 1/6. Its function is as follows. Catalyzes the NADPH-dependent rearrangement and reduction of 1-deoxy-D-xylulose-5-phosphate (DXP) to 2-C-methyl-D-erythritol 4-phosphate (MEP). The protein is 1-deoxy-D-xylulose 5-phosphate reductoisomerase of Shigella flexneri.